A 592-amino-acid polypeptide reads, in one-letter code: ATP-dependent lipid A-core flippase (592 aa).

Helical transmembrane passes span 31-51, 76-96, 134-154, 161-181, 261-281, and 288-308; these read LSSFILAMVAMGVVAATEGII, AMLVGIAVVRGVAQFGATYFL, AVIFEVNQVLQVLTGVFITLV, LALLIFLFYTNWRLTLVVAVI, VTQFLAALALSVILAIAMVQA, and VGGFTGFVMAMLLLISPLKHL. In terms of domain architecture, ABC transmembrane type-1 spans 35–317; sequence ILAMVAMGVV…LTDVNQPMQR (283 aa). Residues 349–587 form the ABC transporter domain; the sequence is LRFEHVTFRY…DGLYAGLHRI (239 aa). Position 383 to 390 (383 to 390) interacts with ATP; the sequence is GPSGSGKT.

The protein belongs to the ABC transporter superfamily. Lipid exporter (TC 3.A.1.106) family. In terms of assembly, homodimer.

The protein resides in the cell inner membrane. The enzyme catalyses ATP + H2O + lipid A-core oligosaccharideSide 1 = ADP + phosphate + lipid A-core oligosaccharideSide 2.. In terms of biological role, involved in lipopolysaccharide (LPS) biosynthesis. Translocates lipid A-core from the inner to the outer leaflet of the inner membrane. Transmembrane domains (TMD) form a pore in the inner membrane and the ATP-binding domain (NBD) is responsible for energy generation. The sequence is that of ATP-dependent lipid A-core flippase from Ralstonia nicotianae (strain ATCC BAA-1114 / GMI1000) (Ralstonia solanacearum).